We begin with the raw amino-acid sequence, 382 residues long: Nitric oxide reductase FlRd-NAD(+) reductase (382 aa).

Belongs to the FAD-dependent oxidoreductase family. FAD is required as a cofactor.

It localises to the cytoplasm. It carries out the reaction 2 reduced [nitric oxide reductase rubredoxin domain] + NAD(+) + H(+) = 2 oxidized [nitric oxide reductase rubredoxin domain] + NADH. It participates in nitrogen metabolism; nitric oxide reduction. In terms of biological role, one of at least two accessory proteins for anaerobic nitric oxide (NO) reductase. Reduces the rubredoxin moiety of NO reductase. In Vibrio vulnificus (strain CMCP6), this protein is Nitric oxide reductase FlRd-NAD(+) reductase.